A 328-amino-acid chain; its full sequence is Arabinose 5-phosphate isomerase KdsD (328 aa).

One can recognise an SIS domain in the interval 41-184 (ACEAIFRCHG…AVALLKARGF (144 aa)). Residues 75–76 (GT), His-82, His-88, 114–123 (TLIPVLKRQK), and 148–150 (NVP) each bind substrate. Position 82 (His-82) interacts with Zn(2+). In terms of domain architecture, CBS 1 spans 210 to 268 (MHTGTEIPTVSPDASLRDALLEITRKSLGLTVICDDSMRIKGIFTDGDLRRVFDMGIDL). Asp-275 provides a ligand contact to substrate. The CBS 2 domain maps to 277–328 (MTRGGIRVPPNILAVDALNLMESRHITALLVADGDQLLGVVHMHDMLRAGVV).

It belongs to the SIS family. GutQ/KpsF subfamily. In terms of assembly, homotetramer.

The catalysed reaction is D-arabinose 5-phosphate = D-ribulose 5-phosphate. The protein operates within carbohydrate biosynthesis; 3-deoxy-D-manno-octulosonate biosynthesis; 3-deoxy-D-manno-octulosonate from D-ribulose 5-phosphate: step 1/3. It participates in bacterial outer membrane biogenesis; lipopolysaccharide biosynthesis. Functionally, involved in the biosynthesis of 3-deoxy-D-manno-octulosonate (KDO), a unique 8-carbon sugar component of lipopolysaccharides (LPSs). Catalyzes the reversible aldol-ketol isomerization between D-ribulose 5-phosphate (Ru5P) and D-arabinose 5-phosphate (A5P). This is Arabinose 5-phosphate isomerase KdsD (kdsD) from Yersinia pestis.